We begin with the raw amino-acid sequence, 727 residues long: Phenylalanine ammonia-lyase str11 (727 aa).

Tyr-105 serves as the catalytic Proton donor/acceptor. The segment at residues 210–212 (ASG) is a cross-link (5-imidazolinone (Ala-Gly)). Ser-211 carries the 2,3-didehydroalanine (Ser) modification. The (E)-cinnamate site is built by Asn-271, Gln-361, Arg-367, Asn-397, Lys-468, Glu-496, and Asn-499.

This sequence belongs to the PAL/histidase family. In terms of processing, contains an active site 4-methylidene-imidazol-5-one (MIO), which is formed autocatalytically by cyclization and dehydration of residues Ala-Ser-Gly.

It catalyses the reaction L-phenylalanine = (E)-cinnamate + NH4(+). Its pathway is mycotoxin biosynthesis. Functionally, phenylalanine ammonia-lyase; part of the gene cluster that mediates the biosynthesis of strobilurin A, an antifungal polyketide that contains a key beta-methoxyacrylate toxophore that targets the complex III of the mitochondrial electron transport chain. Strobilurin biosynthesis begins with construction of benzoyl CoA by step-wise elimination of ammonia from phenylalanine by the phenylalanine ammonia-lyase str11, oxygenation by str8 and retro-Claisen reaction to form benzoic acid, which is activated to its CoA thiolester benzoyl CoA by the dedicated CoA ligase str10. Benzoyl CoA forms the starter unit for the highly reducing polyketide synthase stpks1 that produces the polyketide prestrobilutin A. The FAD-dependent oxygenase str9 then catalyzes the key oxidative rearrangement responsible for the creation of the beta-methoxyacrylate toxophore. Str9 performs epoxidation of the 2,3 olefin of prestrobilutin A, followed by Meinwald rearrangement to furnish the aldehyde intermediate. Rapid enolization of the aldehyde intermediate would give the beta-methoxyacrylate skeleton and methylations catalyzed by str2 and str3 complete the synthesis and lead to the production of strobilurin A. The short-chain dehydrogenase stl2 and the dehydrogenase str4 play a role in the shunt pathway leading to the production of bolineol. The cluster encodes no obvious halogenase gene that could be involved in production of strobilurin B, nor any obvious dimethylallyl-transferase that could be involved in the production of strobilurin G. It is possible that unknown proteins encoded in, or near, the cluster (such as str1 or stl1) may form new classes of halogenases or dimethylally-transferases, or that the responsible genes are located elsewhere on the genome. Similarly, proteins encoded by str5/str6 hydrolases appear to have no chemical role in the biosynthesis of strobilurin A. Finally, no obvious self-resistance gene is found within the cluster. This Strobilurus tenacellus protein is Phenylalanine ammonia-lyase str11.